A 177-amino-acid polypeptide reads, in one-letter code: RNA pyrophosphohydrolase (177 aa).

Positions 6-149 (GYRPNVGIVI…KRDVYRRVMK (144 aa)) constitute a Nudix hydrolase domain. A Nudix box motif is present at residues 38 to 59 (GGINPGESAEQAMYRELFEEVG).

This sequence belongs to the Nudix hydrolase family. RppH subfamily. The cofactor is a divalent metal cation.

Functionally, accelerates the degradation of transcripts by removing pyrophosphate from the 5'-end of triphosphorylated RNA, leading to a more labile monophosphorylated state that can stimulate subsequent ribonuclease cleavage. The protein is RNA pyrophosphohydrolase of Pectobacterium carotovorum subsp. carotovorum (strain PC1).